Here is a 225-residue protein sequence, read N- to C-terminus: Histone H1.11L (225 aa).

2 stretches are compositionally biased toward low complexity: residues 1–23 and 31–43; these read MSET…PAKA and AAGG…PAGP. Disordered stretches follow at residues 1–46 and 94–225; these read MSET…PSVT and SKGT…AKKK. Ser-2 carries the post-translational modification N-acetylserine. The 74-residue stretch at 41–114 folds into the H15 domain; the sequence is AGPSVTELIT…GASGSFRLSK (74 aa). Basic residues-rich tracts occupy residues 123–138, 146–163, 171–189, and 198–225; these read APKK…KPAA, KKPK…KAKK, KSAK…KKAV, and KAVK…AKKK.

Belongs to the histone H1/H5 family.

It localises to the nucleus. Its subcellular location is the chromosome. Histones H1 are necessary for the condensation of nucleosome chains into higher-order structures. This chain is Histone H1.11L, found in Gallus gallus (Chicken).